The sequence spans 254 residues: Mediator of RNA polymerase II transcription subunit 4 (254 aa).

The stretch at 72–114 (RVHQEMQSLEKEVEKRDSDIQQLQKQLKEAEHILATAVYQAKE) forms a coiled coil. Residues 215–254 (ILPPHHGNDFGLEPPGHNKENEDDVEAMSTDSSSSSSDSD) are disordered. The span at 243–254 (STDSSSSSSDSD) shows a compositional bias: low complexity.

The protein belongs to the Mediator complex subunit 4 family. In terms of assembly, component of the Mediator complex.

It is found in the nucleus. Functionally, component of the Mediator complex, a coactivator involved in the regulated transcription of nearly all RNA polymerase II-dependent genes. Mediator functions as a bridge to convey information from gene-specific regulatory proteins to the basal RNA polymerase II transcription machinery. Mediator is recruited to promoters by direct interactions with regulatory proteins and serves as a scaffold for the assembly of a functional preinitiation complex with RNA polymerase II and the general transcription factors. This Danio rerio (Zebrafish) protein is Mediator of RNA polymerase II transcription subunit 4 (med4).